The following is a 321-amino-acid chain: MTHFVLVGDVGGTNTRLALCDAMTGELSQIETYSGLDFPSLEGAIRDYLDSRQVTVQDACIAIACPITGDWVAMTNHTWAFSIAEMKASLGLRHFEVINDFTAVSMAVPVMGRESLLQFGGGEPVPGKPVAVYGAGTGLGVAHLVHVANQWVSLPGEGGHVDFAANSDEEDNILTILRQSLGHVSAERLLSGQGLVNIYRAIVLSDDRTPEALEPKDITERAVNNTDVDCRRALSLFCVIMGRFGGNLALNLGTFGGVYIAGGIVPRFLEFFKASGFRAAFEDKGRFKGYMQDIPVYLITHEQPGLMGAGAYLRQVLGSAL.

Glycine 8–threonine 13 is a binding site for ATP.

The protein belongs to the bacterial glucokinase family.

Its subcellular location is the cytoplasm. The catalysed reaction is D-glucose + ATP = D-glucose 6-phosphate + ADP + H(+). The chain is Glucokinase from Pectobacterium atrosepticum (strain SCRI 1043 / ATCC BAA-672) (Erwinia carotovora subsp. atroseptica).